The chain runs to 60 residues: Protein translocase subunit SecE (60 aa).

The helical transmembrane segment at 31–51 (VIVVSTVIFFLVFFYALDLGI) threads the bilayer.

It belongs to the SecE/SEC61-gamma family. Component of the Sec protein translocase complex. Heterotrimer consisting of SecY, SecE and SecG subunits. The heterotrimers can form oligomers, although 1 heterotrimer is thought to be able to translocate proteins. Interacts with the ribosome. Interacts with SecDF, and other proteins may be involved. Interacts with SecA.

The protein localises to the cell membrane. Its function is as follows. Essential subunit of the Sec protein translocation channel SecYEG. Clamps together the 2 halves of SecY. May contact the channel plug during translocation. This chain is Protein translocase subunit SecE, found in Staphylococcus aureus (strain Mu50 / ATCC 700699).